A 642-amino-acid chain; its full sequence is AEKIKICLQKQVNSSFSLHNGFGGNLYATEEKRMFELVKPKAGASVLNQSTWICFGDSRTDQSNSAFPRSADVSAKTADKFRSLSGGSLMLSMFGPPGKVDYLYQGCGKHKVFYEGVNWSPHAAIDCYRKNWTDIKLNFQKSIYELASQSHCMSLVNALDKTIPLQVTKGVAKNCNNSFLKNPALYTQEVKPLEQICGEENLAFFTLPTQFGTYECKLHLVASCYFIYDSKEVYNKRGCGNYFQVIYDSSGKVVGGLDNRVSPYTGNTGDTPTMQCDMLQLKPGRYSVRSSPRFLLMPERSYCFDMKEKGLVTAVQSIWGKGRKSDYAVDQACLSTPGCMLIQKQKPYIGEADDHHGDQEMRELLSGLDYEARCISQSGWVNETSPFTEEYLLPPKFGRCPLAAKEESIPKIPDGLLIPTSGTDTTVTKPKSRIFGIDDLIIGLLFVAIVEAGIGGYLLGSRKESGGGVTKESAEKGFEKIGNDIQILRSSTNIAIEKLNDRITHDEQAIRDLTLEIENARSEALLGELGIIRALLVGNISIGLQESLWELASEITNRAGDLAVEVSPGCWIIDDNICDQSCQNFIFKFNETAPVPTIPPLDTKIDLQSDPFYWGSSLGLAITTPISLAALVISGIAICRTK.

Residue Ala-1 is a signal peptide. Residues 2-27 (EKIKICLQKQVNSSFSLHNGFGGNLY) form a fusion domain-1 region. At 2 to 617 (EKIKICLQKQ…QSDPFYWGSS (616 aa)) the chain is on the extracellular side. Cystine bridges form between Cys-7–Cys-570, Cys-107–Cys-152, Cys-127–Cys-175, Cys-197–Cys-239, Cys-216–Cys-303, Cys-224–Cys-276, and Cys-333–Cys-339. 2 N-linked (GlcNAc...) asparagine; by host glycosylation sites follow: Asn-13 and Asn-48. The tract at residues 28–138 (ATEEKRMFEL…RKNWTDIKLN (111 aa)) is esterase domain-1. Ser-58 functions as the Nucleophile in the catalytic mechanism. The N-linked (GlcNAc...) asparagine; by host glycan is linked to Asn-131. The interval 138-297 (NFQKSIYELA…VRSSPRFLLM (160 aa)) is N-acetyl-9-O-acetylneuraminic acid binding. The segment at 298 to 352 (PERSYCFDMKEKGLVTAVQSIWGKGRKSDYAVDQACLSTPGCMLIQKQKPYIGEA) is esterase domain-2. Catalysis depends on charge relay system residues Asp-353 and His-356. The tract at residues 353–638 (DDHHGDQEMR…AALVISGIAI (286 aa)) is fusion domain-2. N-linked (GlcNAc...) asparagine; by host glycosylation occurs at Asn-382. The chain crosses the membrane as a helical span at residues 618–638 (LGLAITTPISLAALVISGIAI). The Cytoplasmic portion of the chain corresponds to 639 to 642 (CRTK).

This sequence belongs to the influenza type C/coronaviruses hemagglutinin-esterase family. As to quaternary structure, homotrimer of disulfide-linked HEF1-HEF2. Post-translationally, in natural infection, inactive HEF is matured into HEF1 and HEF2 outside the cell by one or more trypsin-like, arginine-specific endoprotease.

The protein localises to the virion membrane. Its subcellular location is the host cell membrane. It catalyses the reaction N-acetyl-9-O-acetylneuraminate + H2O = N-acetylneuraminate + acetate + H(+). The catalysed reaction is N-acetyl-4-O-acetylneuraminate + H2O = N-acetylneuraminate + acetate + H(+). Functionally, binds to the N-acetyl-9-O-acetylneuraminic acid residues on the cell surface, bringing about the attachment of the virus particle to the cell. Plays a major role in the determination of host range restriction and virulence. Class I viral fusion protein. Responsible for penetration of the virus into the cell cytoplasm by mediating the fusion of the membrane of the endocytosed virus particle with the endosomal membrane. Low pH in endosomes induce an irreversible conformational change in HEF2, releasing the fusion hydrophobic peptide. Several trimers are required to form a competent fusion pore. Displays a receptor-destroying activity which is a neuraminidate-O-acetyl esterase. This activity cleaves off any receptor on the cell surface, which would otherwise prevent virions release. These cleavages prevent self-aggregation and ensure the efficient spread of the progeny virus from cell to cell. The protein is Hemagglutinin-esterase-fusion glycoprotein (HE) of Influenza C virus (strain C/England/892/1983).